Here is a 474-residue protein sequence, read N- to C-terminus: Trehalose-6-phosphate synthase (474 aa).

R10 lines the D-glucose 6-phosphate pocket. UDP-alpha-D-glucose is bound at residue 22 to 23 (GG). Y77 and D131 together coordinate D-glucose 6-phosphate. UDP-alpha-D-glucose-binding residues include R263 and K268. R301 contacts D-glucose 6-phosphate. Residues F340 and 366 to 370 (LVAKE) contribute to the UDP-alpha-D-glucose site.

This sequence belongs to the glycosyltransferase 20 family. As to quaternary structure, homotetramer.

It catalyses the reaction D-glucose 6-phosphate + UDP-alpha-D-glucose = alpha,alpha-trehalose 6-phosphate + UDP + H(+). Its pathway is glycan biosynthesis; trehalose biosynthesis. Its function is as follows. Probably involved in the osmoprotection via the biosynthesis of trehalose. Catalyzes the transfer of glucose from UDP-alpha-D-glucose (UDP-Glc) to D-glucose 6-phosphate (Glc-6-P) to form trehalose-6-phosphate. Acts with retention of the anomeric configuration of the UDP-sugar donor. This Escherichia coli O1:K1 / APEC protein is Trehalose-6-phosphate synthase.